Reading from the N-terminus, the 383-residue chain is Acetylornithine deacetylase (383 aa).

His80 is a Zn(2+) binding site. Asp82 is an active-site residue. Residue Asp112 coordinates Zn(2+). Residue Glu144 is part of the active site. The Zn(2+) site is built by Glu145, Glu169, and His355.

Belongs to the peptidase M20A family. ArgE subfamily. In terms of assembly, homodimer. It depends on Zn(2+) as a cofactor. The cofactor is Co(2+). Glutathione is required as a cofactor.

The protein resides in the cytoplasm. The enzyme catalyses N(2)-acetyl-L-ornithine + H2O = L-ornithine + acetate. The protein operates within amino-acid biosynthesis; L-arginine biosynthesis; L-ornithine from N(2)-acetyl-L-ornithine (linear): step 1/1. Catalyzes the hydrolysis of the amide bond of N(2)-acetylated L-amino acids. Cleaves the acetyl group from N-acetyl-L-ornithine to form L-ornithine, an intermediate in L-arginine biosynthesis pathway, and a branchpoint in the synthesis of polyamines. The chain is Acetylornithine deacetylase from Salmonella arizonae (strain ATCC BAA-731 / CDC346-86 / RSK2980).